The following is a 210-amino-acid chain: Thiamine-phosphate synthase (210 aa).

4-amino-2-methyl-5-(diphosphooxymethyl)pyrimidine is bound by residues 43–47 (QLREK) and asparagine 75. Mg(2+) is bound by residues aspartate 76 and aspartate 95. Serine 114 is a 4-amino-2-methyl-5-(diphosphooxymethyl)pyrimidine binding site. 140-142 (TST) contacts 2-[(2R,5Z)-2-carboxy-4-methylthiazol-5(2H)-ylidene]ethyl phosphate. Lysine 143 provides a ligand contact to 4-amino-2-methyl-5-(diphosphooxymethyl)pyrimidine. 2-[(2R,5Z)-2-carboxy-4-methylthiazol-5(2H)-ylidene]ethyl phosphate contacts are provided by residues glycine 170 and 190-191 (IS).

The protein belongs to the thiamine-phosphate synthase family. It depends on Mg(2+) as a cofactor.

It catalyses the reaction 2-[(2R,5Z)-2-carboxy-4-methylthiazol-5(2H)-ylidene]ethyl phosphate + 4-amino-2-methyl-5-(diphosphooxymethyl)pyrimidine + 2 H(+) = thiamine phosphate + CO2 + diphosphate. It carries out the reaction 2-(2-carboxy-4-methylthiazol-5-yl)ethyl phosphate + 4-amino-2-methyl-5-(diphosphooxymethyl)pyrimidine + 2 H(+) = thiamine phosphate + CO2 + diphosphate. The catalysed reaction is 4-methyl-5-(2-phosphooxyethyl)-thiazole + 4-amino-2-methyl-5-(diphosphooxymethyl)pyrimidine + H(+) = thiamine phosphate + diphosphate. Its pathway is cofactor biosynthesis; thiamine diphosphate biosynthesis; thiamine phosphate from 4-amino-2-methyl-5-diphosphomethylpyrimidine and 4-methyl-5-(2-phosphoethyl)-thiazole: step 1/1. Functionally, condenses 4-methyl-5-(beta-hydroxyethyl)thiazole monophosphate (THZ-P) and 2-methyl-4-amino-5-hydroxymethyl pyrimidine pyrophosphate (HMP-PP) to form thiamine monophosphate (TMP). The chain is Thiamine-phosphate synthase from Clostridioides difficile (strain 630) (Peptoclostridium difficile).